The sequence spans 549 residues: Glucose-6-phosphate isomerase (549 aa).

E355 (proton donor) is an active-site residue. Residues H386 and K514 contribute to the active site.

Belongs to the GPI family.

The protein localises to the cytoplasm. The catalysed reaction is alpha-D-glucose 6-phosphate = beta-D-fructose 6-phosphate. Its pathway is carbohydrate biosynthesis; gluconeogenesis. The protein operates within carbohydrate degradation; glycolysis; D-glyceraldehyde 3-phosphate and glycerone phosphate from D-glucose: step 2/4. Catalyzes the reversible isomerization of glucose-6-phosphate to fructose-6-phosphate. The polypeptide is Glucose-6-phosphate isomerase (Salmonella paratyphi C (strain RKS4594)).